A 328-amino-acid chain; its full sequence is Phosphate acyltransferase (328 aa).

This sequence belongs to the PlsX family. Homodimer. Probably interacts with PlsY.

It is found in the cytoplasm. It catalyses the reaction a fatty acyl-[ACP] + phosphate = an acyl phosphate + holo-[ACP]. The protein operates within lipid metabolism; phospholipid metabolism. Functionally, catalyzes the reversible formation of acyl-phosphate (acyl-PO(4)) from acyl-[acyl-carrier-protein] (acyl-ACP). This enzyme utilizes acyl-ACP as fatty acyl donor, but not acyl-CoA. The polypeptide is Phosphate acyltransferase (Staphylococcus aureus (strain Mu3 / ATCC 700698)).